The chain runs to 113 residues: Pancreatic progenitor cell differentiation and proliferation factor A (113 aa).

Belongs to the PPDPF family.

Functionally, probable regulator of exocrine pancreas development. This Xenopus laevis (African clawed frog) protein is Pancreatic progenitor cell differentiation and proliferation factor A (ppdpf-a).